We begin with the raw amino-acid sequence, 175 residues long: Large ribosomal subunit protein uL10 (175 aa).

It belongs to the universal ribosomal protein uL10 family. In terms of assembly, part of the ribosomal stalk of the 50S ribosomal subunit. The N-terminus interacts with L11 and the large rRNA to form the base of the stalk. The C-terminus forms an elongated spine to which L12 dimers bind in a sequential fashion forming a multimeric L10(L12)X complex.

Forms part of the ribosomal stalk, playing a central role in the interaction of the ribosome with GTP-bound translation factors. This chain is Large ribosomal subunit protein uL10, found in Mycolicibacterium smegmatis (strain ATCC 700084 / mc(2)155) (Mycobacterium smegmatis).